A 311-amino-acid polypeptide reads, in one-letter code: Probable manganese-dependent inorganic pyrophosphatase (311 aa).

Residues His-9, Asp-13, Asp-15, Asp-75, His-97, and Asp-149 each contribute to the Mn(2+) site.

The protein belongs to the PPase class C family. Mn(2+) is required as a cofactor.

It localises to the cytoplasm. It catalyses the reaction diphosphate + H2O = 2 phosphate + H(+). The polypeptide is Probable manganese-dependent inorganic pyrophosphatase (Lactobacillus acidophilus (strain ATCC 700396 / NCK56 / N2 / NCFM)).